Here is a 1217-residue protein sequence, read N- to C-terminus: Rho family-interacting cell polarization regulator 1 (1217 aa).

At Ser22 the chain carries Phosphoserine. The stretch at 83-112 (RGLTAYLEVHQQEQEKLQRQIKESKRNSRL) forms a coiled coil. Residues Ser345 and Ser347 each carry the phosphoserine modification. At Thr351 the chain carries Phosphothreonine. The tract at residues 371-413 (NGTAWSLSSESSDDSSSPQLSGTARYSSTPKPLVQQPEPLPVQ) is disordered. Composition is skewed to low complexity over residues 376–391 (SLSS…PQLS) and 400–413 (PKPL…LPVQ). Phosphoserine occurs at positions 452 and 455. The interval 565–762 (TSTTVGSTHK…SPSSIVPEPQ (198 aa)) is disordered. The span at 579–594 (PLTSTGSIPSVTDSIQ) shows a compositional bias: polar residues. Residues 595–649 (TTTSPTHTTPSPTHTTVSPTHSTPSPTHTTVSPSNAALSPSNATPSLSHSTTSPT) are compositionally biased toward low complexity. Over residues 650-661 (QKATMSTHTTSA) the composition is skewed to polar residues. The span at 664–695 (PVQTTTSPISTTVSPSPSVDTAIISSSSAVPS) shows a compositional bias: low complexity. Positions 720–729 (ACTSSPSLAS) are enriched in polar residues. Residue Ser742 is modified to Phosphoserine. Residues 786–828 (RRLEEALRTLMAALDDYRGQFPELQGLEQEVTRLESLLMQRQG) are a coiled coil. Positions 850-874 (FLNDDEDEDNDSPGDRPTSSPEVVA) are disordered. Residues 852–861 (NDDEDEDNDS) show a composition bias toward acidic residues. 2 positions are modified to phosphoserine: Ser868 and Ser869.

The protein belongs to the RIPOR family. Interacts (via N-terminus) with RHOA (GTP-bound form); this interaction links active RHOA to STK24 and STK26 kinases. Interacts with RHOB. Interacts with RHOC. Interacts (via C-terminus) with PDCD10; this interaction occurs in a Rho-independent manner. Interacts (via C-terminus) with STK24; this interaction occurs in a PDCD10-dependent and Rho-independent manner. Interacts (via C-terminus) with STK26; this interaction occurs in a PDCD10-dependent and Rho-independent manner. Interacts (via N-terminus) with 14-3-3 proteins; these interactions occur in a Rho-dependent manner.

The protein localises to the cytoplasm. It localises to the golgi apparatus. Downstream effector protein for Rho-type small GTPases that plays a role in cell polarity and directional migration. Acts as an adapter protein, linking active Rho proteins to STK24 and STK26 kinases, and hence positively regulates Golgi reorientation in polarized cell migration upon Rho activation. Involved in the subcellular relocation of STK26 from the Golgi to cytoplasm punctae in a Rho- and PDCD10-dependent manner upon serum stimulation. The chain is Rho family-interacting cell polarization regulator 1 from Rattus norvegicus (Rat).